The primary structure comprises 445 residues: 2-oxoisovalerate dehydrogenase subunit alpha, mitochondrial (445 aa).

The N-terminal 45 residues, Met1 to Phe45, are a transit peptide targeting the mitochondrion. A disordered region spans residues Leu33 to Phe54. Thiamine diphosphate-binding residues include Tyr158 and Arg159. Ser206 provides a ligand contact to K(+). Position 207 (Ser207) interacts with thiamine diphosphate. Positions 208, 211, and 212 each coordinate K(+). Residue Glu238 coordinates Mg(2+). Residues Gly239, Ala240, and Arg265 each contribute to the thiamine diphosphate site. Asn267 and Tyr269 together coordinate Mg(2+). His336 contacts thiamine diphosphate. A Phosphoserine; by BCKDK modification is found at Ser337. At Thr338 the chain carries Phosphothreonine. Phosphoserine occurs at positions 339 and 347. Lys356 bears the N6-acetyllysine; alternate mark. Lys356 bears the N6-succinyllysine; alternate mark. Lys380 carries the post-translational modification N6-succinyllysine.

It belongs to the BCKDHA family. In terms of assembly, heterotetramer of 2 alpha/BCKDHA and 2 beta chains/BCKDHB that forms the branched-chain alpha-keto acid decarboxylase (E1) component of the BCKD complex. The branched-chain alpha-ketoacid dehydrogenase is a large complex composed of three major building blocks E1, E2 and E3. It is organized around E2, a 24-meric cubic core composed of DBT, to which are associated 6 to 12 copies of E1, and approximately 6 copies of the dehydrogenase E3, a DLD dimer. Interacts with PPM1K. Requires thiamine diphosphate as cofactor. Mg(2+) serves as cofactor. Post-translationally, phosphorylated at Ser-337 by BCKDK and dephosphorylated by protein phosphatase PPM1K.

It localises to the mitochondrion matrix. It carries out the reaction N(6)-[(R)-lipoyl]-L-lysyl-[protein] + 3-methyl-2-oxobutanoate + H(+) = N(6)-[(R)-S(8)-2-methylpropanoyldihydrolipoyl]-L-lysyl-[protein] + CO2. Functionally, together with BCKDHB forms the heterotetrameric E1 subunit of the mitochondrial branched-chain alpha-ketoacid dehydrogenase (BCKD) complex. The BCKD complex catalyzes the multi-step oxidative decarboxylation of alpha-ketoacids derived from the branched-chain amino-acids valine, leucine and isoleucine producing CO2 and acyl-CoA which is subsequently utilized to produce energy. The E1 subunit catalyzes the first step with the decarboxylation of the alpha-ketoacid forming an enzyme-product intermediate. A reductive acylation mediated by the lipoylamide cofactor of E2 extracts the acyl group from the E1 active site for the next step of the reaction. This chain is 2-oxoisovalerate dehydrogenase subunit alpha, mitochondrial (BCKDHA), found in Pan troglodytes (Chimpanzee).